The sequence spans 256 residues: Triosephosphate isomerase (256 aa).

9–11 (NWK) contributes to the substrate binding site. The Electrophile role is filled by His-97. Glu-169 serves as the catalytic Proton acceptor. Substrate-binding positions include Gly-175, Ser-214, and 235–236 (GG).

Belongs to the triosephosphate isomerase family. Homodimer.

Its subcellular location is the cytoplasm. The enzyme catalyses D-glyceraldehyde 3-phosphate = dihydroxyacetone phosphate. It functions in the pathway carbohydrate biosynthesis; gluconeogenesis. It participates in carbohydrate degradation; glycolysis; D-glyceraldehyde 3-phosphate from glycerone phosphate: step 1/1. In terms of biological role, involved in the gluconeogenesis. Catalyzes stereospecifically the conversion of dihydroxyacetone phosphate (DHAP) to D-glyceraldehyde-3-phosphate (G3P). This Vibrio parahaemolyticus serotype O3:K6 (strain RIMD 2210633) protein is Triosephosphate isomerase.